The sequence spans 451 residues: Trigger factor (451 aa).

The region spanning 165–250 (DDKLTIDFEG…LRQIQVREAL (86 aa)) is the PPIase FKBP-type domain.

Belongs to the FKBP-type PPIase family. Tig subfamily.

It localises to the cytoplasm. The enzyme catalyses [protein]-peptidylproline (omega=180) = [protein]-peptidylproline (omega=0). In terms of biological role, involved in protein export. Acts as a chaperone by maintaining the newly synthesized protein in an open conformation. Functions as a peptidyl-prolyl cis-trans isomerase. This Helicobacter pylori (strain J99 / ATCC 700824) (Campylobacter pylori J99) protein is Trigger factor (tig).